Consider the following 405-residue polypeptide: Tryptophan synthase beta chain (405 aa).

The residue at position 98 (Lys98) is an N6-(pyridoxal phosphate)lysine.

Belongs to the TrpB family. Tetramer of two alpha and two beta chains. The cofactor is pyridoxal 5'-phosphate.

It catalyses the reaction (1S,2R)-1-C-(indol-3-yl)glycerol 3-phosphate + L-serine = D-glyceraldehyde 3-phosphate + L-tryptophan + H2O. Its pathway is amino-acid biosynthesis; L-tryptophan biosynthesis; L-tryptophan from chorismate: step 5/5. In terms of biological role, the beta subunit is responsible for the synthesis of L-tryptophan from indole and L-serine. This chain is Tryptophan synthase beta chain, found in Afipia carboxidovorans (strain ATCC 49405 / DSM 1227 / KCTC 32145 / OM5) (Oligotropha carboxidovorans).